The sequence spans 689 residues: Protein SDA1 homolog (689 aa).

The stretch at 254-319 (KKNTKNKKKL…RFEVKLMHMD (66 aa)) forms a coiled coil. Disordered regions lie at residues 485–512 (EQEK…DGEW) and 606–689 (KPKS…RLMK). A compositionally biased stretch (basic and acidic residues) spans 668 to 681 (SFRDKQIALRDSLL).

The protein belongs to the SDA1 family.

It is found in the nucleus. The protein resides in the nucleolus. In terms of biological role, required for 60S pre-ribosomal subunits export to the cytoplasm. This Xenopus tropicalis (Western clawed frog) protein is Protein SDA1 homolog (sdad1).